We begin with the raw amino-acid sequence, 388 residues long: Chorismate synthase (388 aa).

NADP(+) contacts are provided by arginine 39 and arginine 45. Residues 130–132 (RSS), 251–252 (NA), glycine 296, 311–315 (KPIPT), and arginine 337 each bind FMN.

It belongs to the chorismate synthase family. As to quaternary structure, homotetramer. FMNH2 is required as a cofactor.

It catalyses the reaction 5-O-(1-carboxyvinyl)-3-phosphoshikimate = chorismate + phosphate. It participates in metabolic intermediate biosynthesis; chorismate biosynthesis; chorismate from D-erythrose 4-phosphate and phosphoenolpyruvate: step 7/7. Its function is as follows. Catalyzes the anti-1,4-elimination of the C-3 phosphate and the C-6 proR hydrogen from 5-enolpyruvylshikimate-3-phosphate (EPSP) to yield chorismate, which is the branch point compound that serves as the starting substrate for the three terminal pathways of aromatic amino acid biosynthesis. This reaction introduces a second double bond into the aromatic ring system. The sequence is that of Chorismate synthase from Streptococcus sanguinis (strain SK36).